A 540-amino-acid chain; its full sequence is Ubiquitin carboxyl-terminal hydrolase 17-like protein E (540 aa).

A disordered region spans residues 1-22 (MVVSLSFPEETGGENLPSAPLE). Residues 85-382 (CGLQNTGNSC…NAYVLFYVQQ (298 aa)) enclose the USP domain. Cys94 (nucleophile) is an active-site residue. Residue His341 is the Proton acceptor of the active site. Basic and acidic residues-rich tracts occupy residues 431–441 (NREKRAKKETS) and 508–520 (APDKENQPWHNGD). Disordered regions lie at residues 431–461 (NREKRAKKETSLGEGKVPQEVNHEKAGQKHG) and 499–540 (RSTA…QGGR). The span at 523-540 (LTSQGLMSPGQLCSQGGR) shows a compositional bias: polar residues.

Belongs to the peptidase C19 family. USP17 subfamily. As to quaternary structure, interacts with SUDS3; the interaction is direct.

It localises to the nucleus. The protein localises to the endoplasmic reticulum. It catalyses the reaction Thiol-dependent hydrolysis of ester, thioester, amide, peptide and isopeptide bonds formed by the C-terminal Gly of ubiquitin (a 76-residue protein attached to proteins as an intracellular targeting signal).. In terms of biological role, deubiquitinating enzyme that removes conjugated ubiquitin from specific proteins to regulate different cellular processes that may include cell proliferation, progression through the cell cycle, apoptosis, cell migration, and the cellular response to viral infection. This is Ubiquitin carboxyl-terminal hydrolase 17-like protein E (Usp17le) from Mus musculus (Mouse).